Here is a 198-residue protein sequence, read N- to C-terminus: Chitin synthase 2 (198 aa).

This sequence belongs to the chitin synthase family. Class III subfamily.

It localises to the cell membrane. The catalysed reaction is [(1-&gt;4)-N-acetyl-beta-D-glucosaminyl](n) + UDP-N-acetyl-alpha-D-glucosamine = [(1-&gt;4)-N-acetyl-beta-D-glucosaminyl](n+1) + UDP + H(+). Functionally, polymerizes chitin, a structural polymer of the cell wall and septum, by transferring the sugar moiety of UDP-GlcNAc to the non-reducing end of the growing chitin polymer. The sequence is that of Chitin synthase 2 (CHS2) from Rhinocladiella atrovirens.